The following is a 421-amino-acid chain: FBD-associated F-box protein At5g56370 (421 aa).

The 52-residue stretch at 1-52 (MDSISLLPDDFLLRILSLLPTKDVLNTSVLSKRWRYLWKLVPKLQYSLIDKN) folds into the F-box domain. One can recognise an FBD domain in the interval 332–382 (HWEEPSSVPETLMFVLETLEWRNYRGLKMENELASFLLKHSRRLKIATFSP).

The polypeptide is FBD-associated F-box protein At5g56370 (Arabidopsis thaliana (Mouse-ear cress)).